The chain runs to 343 residues: Vancomycin C-type resistance protein VanC1 (343 aa).

The 203-residue stretch at H134 to A336 folds into the ATP-grasp domain. I164–G219 serves as a coordination point for ATP. 3 residues coordinate Mg(2+): D290, E303, and N305. D290, E303, and N305 together coordinate Mn(2+).

The protein belongs to the D-alanine--D-alanine ligase family. Mg(2+) serves as cofactor. It depends on Mn(2+) as a cofactor.

The protein resides in the cell membrane. The enzyme catalyses D-serine + D-alanine + ATP = D-alanyl-D-serine + ADP + phosphate + H(+). Functionally, D-alanine--D-alanine ligase of altered specificity, which catalyzes synthesis of D-Ala-D-Ser; produces a peptidoglycan which does not terminate in D-alanine but in D-serine, thus probably reducing affinity for vancomycin. Together with VanT and VanXYC, required for vancomycin resistance in E.gallinarum strain BM4174. In Enterococcus gallinarum, this protein is Vancomycin C-type resistance protein VanC1.